Reading from the N-terminus, the 260-residue chain is uncharacterized protein (260 aa).

Residues 1–22 form the signal peptide; the sequence is MGYIKRIGLYISIFILIVMVAG. A lipid anchor (N-palmitoyl cysteine) is attached at Cys-23. A lipid anchor (S-diacylglycerol cysteine) is attached at Cys-23.

Belongs to the staphylococcal tandem lipoprotein family.

The protein resides in the cell membrane. This is an uncharacterized protein from Staphylococcus aureus (strain bovine RF122 / ET3-1).